Here is a 109-residue protein sequence, read N- to C-terminus: Large ribosomal subunit protein uL22 (109 aa).

Residues 84–95 (ARGTASRIRKPT) are compositionally biased toward basic residues. Residues 84-109 (ARGTASRIRKPTSHIMVEVSKPSKEA) form a disordered region.

It belongs to the universal ribosomal protein uL22 family. As to quaternary structure, part of the 50S ribosomal subunit.

In terms of biological role, this protein binds specifically to 23S rRNA; its binding is stimulated by other ribosomal proteins, e.g. L4, L17, and L20. It is important during the early stages of 50S assembly. It makes multiple contacts with different domains of the 23S rRNA in the assembled 50S subunit and ribosome. Functionally, the globular domain of the protein is located near the polypeptide exit tunnel on the outside of the subunit, while an extended beta-hairpin is found that lines the wall of the exit tunnel in the center of the 70S ribosome. The polypeptide is Large ribosomal subunit protein uL22 (Campylobacter hominis (strain ATCC BAA-381 / DSM 21671 / CCUG 45161 / LMG 19568 / NCTC 13146 / CH001A)).